The chain runs to 111 residues: Resistin-like gamma (111 aa).

An N-terminal signal peptide occupies residues 1–23; sequence MKTAICSLLICIFLLQLMVPVNT. 5 disulfides stabilise this stretch: cysteine 55/cysteine 108, cysteine 67/cysteine 107, cysteine 76/cysteine 93, cysteine 78/cysteine 95, and cysteine 82/cysteine 97.

It belongs to the resistin/FIZZ family. As to quaternary structure, homodimer. Heterodimer with RETNLB. In terms of tissue distribution, highly expressed in bone marrow, spleen and white blood cells. Also detected at low levels in thymus, lung, trachea, white adipose tissue, nasal respiratory epithelium, colon, small intestine, kidney, liver, and heart.

Its subcellular location is the secreted. Probable hormone. Promotes chemotaxis in myeloid cells. This Rattus norvegicus (Rat) protein is Resistin-like gamma.